The chain runs to 227 residues: Phosphatidylethanolamine-binding protein 4 (227 aa).

Residues 1–22 (MGWTMRLVTAALLLGLMMVVTG) form the signal peptide. The N-linked (GlcNAc...) (complex) asparagine glycan is linked to Asn169. The tract at residues 188-227 (EPEASTQFMTQNYQDSPTLQAPRERASEPKHKNQAEIAAC) is important for secretion. Residues 202–227 (DSPTLQAPRERASEPKHKNQAEIAAC) form a disordered region. The segment covering 209-221 (PRERASEPKHKNQ) has biased composition (basic and acidic residues).

It belongs to the phosphatidylethanolamine-binding protein family.

It is found in the secreted. Functionally, promotes AKT phosphorylation, suggesting a possible role in the PI3K-AKT signaling pathway. The protein is Phosphatidylethanolamine-binding protein 4 (PEBP4) of Homo sapiens (Human).